We begin with the raw amino-acid sequence, 214 residues long: Serine protease inhibitor 2.1 (214 aa).

The protein belongs to the serpin family.

The protein is Serine protease inhibitor 2.1 of Rattus norvegicus (Rat).